Reading from the N-terminus, the 100-residue chain is MYAIVKTGGKQYKVAEGDLVKVEKIEGEPGSAVALTPVLVVDGADLTSGDKLENVAVNAEIVEHVRGPKIRGMHYKNKTGYKRRWGHRQALTVLKITGIK.

Belongs to the bacterial ribosomal protein bL21 family. As to quaternary structure, part of the 50S ribosomal subunit. Contacts protein L20.

This protein binds to 23S rRNA in the presence of protein L20. This Corynebacterium urealyticum (strain ATCC 43042 / DSM 7109) protein is Large ribosomal subunit protein bL21.